The chain runs to 201 residues: Ras-related protein Rab-9A (201 aa).

Alanine 2 carries the post-translational modification N-acetylalanine. 10 residues coordinate GTP: glycine 17, valine 18, glycine 19, lysine 20, serine 21, serine 22, aspartate 33, serine 34, histidine 38, and threonine 39. Serine 21 contacts Mg(2+). The short motif at 31–42 (KFDSQLFHTIGV) is the Switch 1 element. Serine 34 carries the post-translational modification Phosphoserine. Mg(2+) contacts are provided by threonine 39 and aspartate 62. Positions 64-78 (AGQERFRSLRTPFYR) match the Switch 2 motif. GTP contacts are provided by glycine 65, asparagine 124, lysine 125, aspartate 127, alanine 155, and lysine 156. Serine 179 is subject to Phosphoserine. Threonine 187 carries the phosphothreonine modification. 2 S-geranylgeranyl cysteine lipidation sites follow: cysteine 200 and cysteine 201.

It belongs to the small GTPase superfamily. Rab family. Interacts (preferentially in its GTP-bound form) with GCC2 (via its GRIP domain). Interacts (GTP-bound form) with SGSM1; the GDP-bound form has much lower affinity for SGSM1. Interacts with SGSM2. The GTP-bound form but not the GDP-bound form interacts with HPS4. The GTP-bound form but not the GDP-bound form interacts with BLOC-3 complex (heterodimer of HPS1 and HPS4) but does not interact with HPS1 alone. Interacts (GTP-bound form) with NDE1; two RAB9A-GTP molecules lie on the opposite sides of the NDE1 homodimer; the interaction leads to RAB9A-dynein motor tethering. Interacts (GTP-bound form) with NDEL1. It depends on Mg(2+) as a cofactor.

It is found in the cell membrane. It localises to the endoplasmic reticulum membrane. The protein localises to the golgi apparatus membrane. Its subcellular location is the late endosome. The protein resides in the cytoplasmic vesicle. It is found in the phagosome membrane. It localises to the phagosome. The protein localises to the cytoplasmic vesicle membrane. Its subcellular location is the melanosome. The catalysed reaction is GTP + H2O = GDP + phosphate + H(+). Regulated by guanine nucleotide exchange factors (GEFs) which promote the exchange of bound GDP for free GTP. Regulated by GTPase activating proteins (GAPs) which increase the GTP hydrolysis activity. Inhibited by GDP dissociation inhibitors (GDIs). In terms of biological role, the small GTPases Rab are key regulators of intracellular membrane trafficking, from the formation of transport vesicles to their fusion with membranes. Rabs cycle between an inactive GDP-bound form and an active GTP-bound form that is able to recruit to membranes different sets of downstream effectors directly responsible for vesicle formation, movement, tethering and fusion. RAB9A is involved in the transport of proteins between the endosomes and the trans-Golgi network (TGN). Specifically uses NDE1/NDEL1 as an effector to interact with the dynein motor complex in order to control retrograde trafficking of RAB9-associated late endosomes to the TGN. Involved in the recruitment of SGSM2 to melanosomes and is required for the proper trafficking of melanogenic enzymes TYR, TYRP1 and DCT/TYRP2 to melanosomes in melanocytes. The protein is Ras-related protein Rab-9A of Mus musculus (Mouse).